We begin with the raw amino-acid sequence, 154 residues long: MELTTRTIAARKHIALVSHDHCKKSLLAWVMENRDLLAQHELYATGTTGNLVQKATGIDVHCLLSGPMGGDQEVGALISEKKIDILIFFWDPLNAVPHDPDVKALLRLATVWNIPVATNRSTADFLIGSTLFSSEVTIAIPDYDRYMQQRLDLK.

Positions 1-154 (MELTTRTIAA…RYMQQRLDLK (154 aa)) constitute an MGS-like domain. Substrate contacts are provided by residues H19, K23, 45 to 48 (TGTT), and 65 to 66 (SG). D71 (proton donor/acceptor) is an active-site residue. H98 lines the substrate pocket.

The protein belongs to the methylglyoxal synthase family.

It carries out the reaction dihydroxyacetone phosphate = methylglyoxal + phosphate. Functionally, catalyzes the formation of methylglyoxal from dihydroxyacetone phosphate. The polypeptide is Methylglyoxal synthase (Yersinia pseudotuberculosis serotype O:1b (strain IP 31758)).